The chain runs to 235 residues: Sperm annulus positionning complex subunit Chibby3 (235 aa).

The interval 1-41 (MADSKMKWGQAWDSSLGTATTSSSSATGSPSPFQNIRVPDT) is disordered. Low complexity predominate over residues 14–32 (SSLGTATTSSSSATGSPSP). Residues 167 to 181 (LLEENNYLKLQQELL) are leucine-zipper; mediates homodimerization.

The protein belongs to the chibby family. As to quaternary structure, homodimer. Interacts with CIBAR1 (via BAR-like domain); both proteins form a ninefold symmetric structure at the flagellar base; are recruited to the annulus in a mutually dependent manner and regulate annulus positionning. In terms of tissue distribution, testis-specific.

The protein localises to the cell projection. It is found in the cilium. It localises to the flagellum. Its function is as follows. Plays a key role in the correct positioning of the annulus, a septin-based ring strucure in the sperm flagellum, serving both as a physical barrier and a membrane diffusion barrier that separates the midpiece (MP) from the principal piece (PP). This positioning is essential for proper sperm motility and function. Interacts with CIBAR1 to form a complex which localizes to the curved membrane region of the flagellar pocket. By doing so, may provide stability and rigidity to the periannular membrane to prevent membrane deformation. This function is crucial for halting annulus migration at the proximal end of the fibrous sheath-containing PP. This Mus musculus (Mouse) protein is Sperm annulus positionning complex subunit Chibby3 (Cby3).